The chain runs to 399 residues: Homeobox protein ceh-39 (399 aa).

2 disordered regions span residues 32 to 91 and 158 to 187; these read PEPA…GDTE and AKKS…RPAS. The segment covering 60 to 79 has biased composition (low complexity); that stretch reads SSMCGSSSSSSSSSYSSGSS. The segment at residues 205–291 is a DNA-binding region (CUT); that stretch reads NRQIGDDEEL…VRRALCFMKK (87 aa). The segment at residues 315 to 374 is a DNA-binding region (homeobox); sequence SDERIRRFTFTQTQLDSLHTVFQQQDRPNREMQQALSATLKLNRSTVGNFFMNARRRLPK.

This sequence belongs to the CUT homeobox family. Expressed in hermaphrodite gonads.

The protein resides in the nucleus. The protein localises to the chromosome. Its function is as follows. Transcriptional regulator which is involved in the sex determination and X chromosome dosage compensation pathways. Directly binds to 5'-ATTGAT-3' sites in the promoter of sex-determining factor xol-1 to negatively regulate its expression and promote hermaphrodite development. Associates with condensed DNA during mitosis. In Caenorhabditis elegans, this protein is Homeobox protein ceh-39.